The sequence spans 792 residues: DEAD-box ATP-dependent RNA helicase 40 (792 aa).

Low complexity predominate over residues 1–16 (MSAGTAPAAPRYAPDD). Disordered regions lie at residues 1–25 (MSAG…PWRG) and 44–118 (TQYE…PLPA). The 35-residue stretch at 17 to 51 (PSLPKPWRGLVDGTTGYLYYWNPETNITQYEKPLP) folds into the WW domain. Pro residues predominate over residues 52 to 68 (PEDQLPPPPPLPPPPPR). Basic and acidic residues-rich tracts occupy residues 70–80 (GRGDRDRDRRD) and 88–108 (PRRD…DHRS). A Q motif motif is present at residues 150–178 (TSFETGGFPPEILKEIQRAGFSSPTPIQA). Residues 181-355 (WPIALQCQDV…EDLLVHPVQV (175 aa)) enclose the Helicase ATP-binding domain. 194 to 201 (AKTGSGKT) lines the ATP pocket. Positions 303 to 306 (DEAD) match the DEAD box motif. The Helicase C-terminal domain maps to 384–528 (RLEQILRSQD…RVPRDLADMA (145 aa)). A disordered region spans residues 523-792 (DLADMASRGG…NATVQNGGDN (270 aa)). Basic and acidic residues-rich tracts occupy residues 543–560 (TRSD…RYGG) and 572–588 (DSSR…DGRS). 2 stretches are compositionally biased toward basic residues: residues 589–599 (RRSGRGRSRSR) and 609–654 (RSPK…RRHE). Residues 668–708 (GHGERKRTPEADPSRNHTNHSDPKDDRHPEDGKVGKVDLDR) are compositionally biased toward basic and acidic residues. Residues 725-739 (GKTSRSVSPGNQVEG) are compositionally biased toward polar residues. Over residues 764–777 (DEEEGMIDEDGEIA) the composition is skewed to acidic residues.

It belongs to the DEAD box helicase family. DDX5/DBP2 subfamily.

It is found in the nucleus. The enzyme catalyses ATP + H2O = ADP + phosphate + H(+). Its function is as follows. ATP-dependent RNA helicase involved nonsense-mediated mRNA decay and ribosome biogenesis through rRNA processing. This chain is DEAD-box ATP-dependent RNA helicase 40, found in Oryza sativa subsp. japonica (Rice).